A 450-amino-acid polypeptide reads, in one-letter code: Phosphoglucosamine mutase (450 aa).

The Phosphoserine intermediate role is filled by S101. Mg(2+) is bound by residues S101, D243, D245, and D247. S101 bears the Phosphoserine mark.

It belongs to the phosphohexose mutase family. The cofactor is Mg(2+). In terms of processing, activated by phosphorylation.

It catalyses the reaction alpha-D-glucosamine 1-phosphate = D-glucosamine 6-phosphate. In terms of biological role, catalyzes the conversion of glucosamine-6-phosphate to glucosamine-1-phosphate. The polypeptide is Phosphoglucosamine mutase (Desulfotalea psychrophila (strain LSv54 / DSM 12343)).